Reading from the N-terminus, the 420-residue chain is Peroxisomal biogenesis factor 3 (420 aa).

Over Met1–Lys16 the chain is Peroxisomal. Residues Lys17–Ile37 traverse the membrane as a helical segment. The Cytoplasmic segment spans residues Lys38–Glu420.

It belongs to the peroxin-3 family.

It is found in the peroxisome membrane. Its function is as follows. Involved in peroxisome biosynthesis. The sequence is that of Peroxisomal biogenesis factor 3 (PEX3) from Debaryomyces hansenii (strain ATCC 36239 / CBS 767 / BCRC 21394 / JCM 1990 / NBRC 0083 / IGC 2968) (Yeast).